A 148-amino-acid polypeptide reads, in one-letter code: Large ribosomal subunit protein bL9 (148 aa).

This sequence belongs to the bacterial ribosomal protein bL9 family.

Its function is as follows. Binds to the 23S rRNA. In Ectopseudomonas mendocina (strain ymp) (Pseudomonas mendocina), this protein is Large ribosomal subunit protein bL9.